A 285-amino-acid chain; its full sequence is Tryptophan synthase alpha chain (285 aa).

Catalysis depends on proton acceptor residues glutamate 53 and aspartate 64.

The protein belongs to the TrpA family. Tetramer of two alpha and two beta chains.

The catalysed reaction is (1S,2R)-1-C-(indol-3-yl)glycerol 3-phosphate + L-serine = D-glyceraldehyde 3-phosphate + L-tryptophan + H2O. The protein operates within amino-acid biosynthesis; L-tryptophan biosynthesis; L-tryptophan from chorismate: step 5/5. Its function is as follows. The alpha subunit is responsible for the aldol cleavage of indoleglycerol phosphate to indole and glyceraldehyde 3-phosphate. The polypeptide is Tryptophan synthase alpha chain (Bordetella pertussis (strain Tohama I / ATCC BAA-589 / NCTC 13251)).